We begin with the raw amino-acid sequence, 184 residues long: GTP cyclohydrolase 1 (184 aa).

Zn(2+) is bound by residues Cys-75, His-78, and Cys-146.

The protein belongs to the GTP cyclohydrolase I family. In terms of assembly, toroid-shaped homodecamer, composed of two pentamers of five dimers.

It catalyses the reaction GTP + H2O = 7,8-dihydroneopterin 3'-triphosphate + formate + H(+). It functions in the pathway cofactor biosynthesis; 7,8-dihydroneopterin triphosphate biosynthesis; 7,8-dihydroneopterin triphosphate from GTP: step 1/1. This Streptococcus sanguinis (strain SK36) protein is GTP cyclohydrolase 1.